The primary structure comprises 119 residues: Large ribosomal subunit protein bL20 (119 aa).

Belongs to the bacterial ribosomal protein bL20 family.

Its function is as follows. Binds directly to 23S ribosomal RNA and is necessary for the in vitro assembly process of the 50S ribosomal subunit. It is not involved in the protein synthesizing functions of that subunit. This Burkholderia ambifaria (strain MC40-6) protein is Large ribosomal subunit protein bL20.